We begin with the raw amino-acid sequence, 353 residues long: Photosystem II D2 protein (353 aa).

N-acetylthreonine is present on threonine 2. A Phosphothreonine modification is found at threonine 2. A helical transmembrane segment spans residues 41–61; that stretch reads CAYFALGGWFTGTTFVTSWYT. Histidine 118 is a chlorophyll a binding site. The chain crosses the membrane as a helical span at residues 125–141; it reads GFMLRQFELARSVQLRP. Pheophytin a-binding residues include glutamine 130 and asparagine 143. The helical transmembrane segment at 153 to 166 threads the bilayer; it reads VFVSVFLIYPLGQS. Histidine 198 lines the chlorophyll a pocket. A helical transmembrane segment spans residues 208–228; that stretch reads AALLCAIHGATVENTLFEDGD. Residues histidine 215 and phenylalanine 262 each coordinate a plastoquinone. Residue histidine 215 participates in Fe cation binding. Histidine 269 contacts Fe cation. Residues 279–295 traverse the membrane as a helical segment; the sequence is GLWMSALGVVGLALNLR.

This sequence belongs to the reaction center PufL/M/PsbA/D family. PSII is composed of 1 copy each of membrane proteins PsbA, PsbB, PsbC, PsbD, PsbE, PsbF, PsbH, PsbI, PsbJ, PsbK, PsbL, PsbM, PsbT, PsbX, PsbY, PsbZ, Psb30/Ycf12, at least 3 peripheral proteins of the oxygen-evolving complex and a large number of cofactors. It forms dimeric complexes. It depends on The D1/D2 heterodimer binds P680, chlorophylls that are the primary electron donor of PSII, and subsequent electron acceptors. It shares a non-heme iron and each subunit binds pheophytin, quinone, additional chlorophylls, carotenoids and lipids. There is also a Cl(-1) ion associated with D1 and D2, which is required for oxygen evolution. The PSII complex binds additional chlorophylls, carotenoids and specific lipids. as a cofactor.

It localises to the plastid. The protein resides in the chloroplast thylakoid membrane. It carries out the reaction 2 a plastoquinone + 4 hnu + 2 H2O = 2 a plastoquinol + O2. In terms of biological role, photosystem II (PSII) is a light-driven water:plastoquinone oxidoreductase that uses light energy to abstract electrons from H(2)O, generating O(2) and a proton gradient subsequently used for ATP formation. It consists of a core antenna complex that captures photons, and an electron transfer chain that converts photonic excitation into a charge separation. The D1/D2 (PsbA/PsbD) reaction center heterodimer binds P680, the primary electron donor of PSII as well as several subsequent electron acceptors. D2 is needed for assembly of a stable PSII complex. This Chloranthus spicatus (Chulantree) protein is Photosystem II D2 protein.